A 477-amino-acid chain; its full sequence is Dihydrolipoyl dehydrogenase (477 aa).

Residues 34–49, lysine 58, and glycine 122 contribute to the FAD site; that span reads EKYK…GGTC. An intrachain disulfide couples cysteine 49 to cysteine 54. NAD(+) is bound by residues 188 to 192, glutamate 211, valine 245, and 276 to 279; these read GAGVI and AVGR. FAD-binding residues include aspartate 319 and alanine 327. Histidine 451 functions as the Proton acceptor in the catalytic mechanism.

This sequence belongs to the class-I pyridine nucleotide-disulfide oxidoreductase family. In terms of assembly, homodimer. The cofactor is FAD.

It is found in the cytoplasm. The enzyme catalyses N(6)-[(R)-dihydrolipoyl]-L-lysyl-[protein] + NAD(+) = N(6)-[(R)-lipoyl]-L-lysyl-[protein] + NADH + H(+). The pyruvate dehydrogenase complex catalyzes the overall conversion of pyruvate to acetyl-CoA and CO(2). It contains multiple copies of three enzymatic components: pyruvate dehydrogenase (E1), dihydrolipoamide acetyltransferase (E2) and lipoamide dehydrogenase (E3). This chain is Dihydrolipoyl dehydrogenase, found in Azotobacter vinelandii.